We begin with the raw amino-acid sequence, 380 residues long: MAPNLRKSHPLLKMINNSLIDLPTPSNISAWWNFGSLLGICLATQILTGLLLAAHYTADTTLAFSSVAHTCRNVQHGWLIRNLHANGASFFFICIYLHIGRGLYYGSYLYKETWNTGVILLLTLMATAFVGYVLPWGQMSFWGATVITNLFSAVPYGGQTLVEWAWGGFSVDNPTLTRFFTLHFLLPFMIMGLTLIHLTFLHESGSNNPLGIVSNCDKIPFHPYFSLKDILGFTLMLLPLMTLALFSPNLLGDPENFTPANPLVTPPHIKPEWYFLFAYAILRSIPNKLGGVLALAASVLILFLAPLLHKSKQRTMTFRPFSQLLFWTLAANLLILTWVGSQPVEHPFIIIGQLASLTYFTILLILFPIIGALENKMLNY.

4 consecutive transmembrane segments (helical) span residues 34–54 (FGSLLGICLATQILTGLLLAA), 78–99 (WLIRNLHANGASFFFICIYLHI), 114–134 (WNTGVILLLTLMATAFVGYVL), and 179–199 (FFTLHFLLPFMIMGLTLIHLT). Positions 84 and 98 each coordinate heme b. Residues H183 and H197 each contribute to the heme b site. H202 contacts a ubiquinone. A run of 4 helical transmembrane segments spans residues 227 to 247 (LKDILGFTLMLLPLMTLALFS), 289 to 309 (LGGVLALAASVLILFLAPLLH), 321 to 341 (FSQLLFWTLAANLLILTWVGS), and 348 to 368 (FIIIGQLASLTYFTILLILFP).

The protein belongs to the cytochrome b family. In terms of assembly, the cytochrome bc1 complex contains 11 subunits: 3 respiratory subunits (MT-CYB, CYC1 and UQCRFS1), 2 core proteins (UQCRC1 and UQCRC2) and 6 low-molecular weight proteins (UQCRH/QCR6, UQCRB/QCR7, UQCRQ/QCR8, UQCR10/QCR9, UQCR11/QCR10 and a cleavage product of UQCRFS1). This cytochrome bc1 complex then forms a dimer. Heme b serves as cofactor.

The protein localises to the mitochondrion inner membrane. In terms of biological role, component of the ubiquinol-cytochrome c reductase complex (complex III or cytochrome b-c1 complex) that is part of the mitochondrial respiratory chain. The b-c1 complex mediates electron transfer from ubiquinol to cytochrome c. Contributes to the generation of a proton gradient across the mitochondrial membrane that is then used for ATP synthesis. In Antigone antigone (Sarus crane), this protein is Cytochrome b (MT-CYB).